The primary structure comprises 635 residues: Extracellular metalloproteinase 1 (635 aa).

Positions 1–19 (MHGLLLAAGLLSLPLHVLA) are cleaved as a signal peptide. Residues 20–246 (HPQPSTSTSL…VHNVVDYVAH (227 aa)) constitute a propeptide that is removed on maturation. N-linked (GlcNAc...) asparagine glycosylation is present at Asn287. His430 lines the Zn(2+) pocket. Glu431 is a catalytic residue. His434 lines the Zn(2+) pocket. Asn475, Asn594, and Asn623 each carry an N-linked (GlcNAc...) asparagine glycan.

The protein belongs to the peptidase M36 family. Requires Zn(2+) as cofactor.

It localises to the secreted. Its function is as follows. Secreted metalloproteinase probably acting as a virulence factor. In Trichophyton tonsurans (Scalp ringworm fungus), this protein is Extracellular metalloproteinase 1 (MEP1).